The chain runs to 152 residues: Transcriptional repressor NrdR (152 aa).

A zinc finger lies at 3–34 (CPFCHNEQSRVIDSRVIDSGTSIRRRRECAAC). The 91-residue stretch at 46-136 (LSVVKRNGLA…VYKSFESADD (91 aa)) folds into the ATP-cone domain.

The protein belongs to the NrdR family. Zn(2+) is required as a cofactor.

Its function is as follows. Negatively regulates transcription of bacterial ribonucleotide reductase nrd genes and operons by binding to NrdR-boxes. This is Transcriptional repressor NrdR from Corynebacterium aurimucosum (strain ATCC 700975 / DSM 44827 / CIP 107346 / CN-1) (Corynebacterium nigricans).